A 563-amino-acid polypeptide reads, in one-letter code: Germacrene C/D synthase (563 aa).

The disordered stretch occupies residues 1-22 (MESCLSVSSAPPPKKNIQEPVR). Positions 315, 319, and 468 each coordinate Mg(2+). The short motif at 315 to 319 (DDTYD) is the DDXXD motif element.

The protein belongs to the terpene synthase family. Mg(2+) serves as cofactor. In terms of tissue distribution, predominantly expressed in root.

The enzyme catalyses (2E,6E)-farnesyl diphosphate = germacrene C + diphosphate. The catalysed reaction is (2E,6E)-farnesyl diphosphate = (-)-germacrene D + diphosphate. Functionally, mediates formation of germacrene C and germacrene D using farnesyl diphosphate as substrate. Can also catalyze formation of trace of germacrene B. The protein is Germacrene C/D synthase (TPS1) of Valeriana officinalis (Valerian).